Here is a 495-residue protein sequence, read N- to C-terminus: Protein painting of fourth (495 aa).

Residues 1-51 (MDSKRAALESGDGPDAKRLDTTDDQDKEASGGDGSQVMLAKHVAPYTGHGC) are disordered. The RRM domain maps to 215–289 (CSLYVGNIPF…RTLTVRYRRL (75 aa)). Residues 332–342 (ISDSDNCSDSS) are compositionally biased toward low complexity. Disordered stretches follow at residues 332–358 (ISDSDNCSDSSGNGKEDGKRKKKINEQ), 432–451 (PVPATKPTTQAQDDSQKKAK), and 461–495 (GPFRRGTSAMKTADEYEKDDRLEELYAQLERDPDP). The span at 345 to 358 (GKEDGKRKKKINEQ) shows a compositional bias: basic and acidic residues. The Bipartite nuclear localization signal signature appears at 351–367 (RKKKINEQEREIEKLKR). Positions 472–495 (TADEYEKDDRLEELYAQLERDPDP) are enriched in basic and acidic residues.

Interacts with Zeste. As to expression, weakly expressed in embryos. Expression increases during larval and pupal stages. In adults, it is predominantly expressed in males, while it is weakly expressed in females.

It localises to the nucleus. Its subcellular location is the chromosome. Functionally, probable RNA-binding protein that specifically binds to the fourth chromosome and may bind an RNA that spreads the fourth chromosome. May be a reminiscence of X chromosome dosage compensation of ancestral Drosophila species in which the X and the fourth chromosomes are one single chromosome. In Drosophila melanogaster (Fruit fly), this protein is Protein painting of fourth (Pof).